The chain runs to 473 residues: Maltose fermentation regulatory protein MAL63 (473 aa).

The zn(2)-C6 fungal-type DNA-binding region spans 8–34; the sequence is CDCCRVRRVKCDRNKPCNRCIQRNLNC. The Nuclear localization signal motif lies at 41–49; that stretch reads KKRGPKSIR.

Belongs to the MAL13 family.

It is found in the nucleus. In terms of biological role, regulates the coordinate transcription of structural MAL6S (maltase) and MAL6T (maltose permease) genes. The polypeptide is Maltose fermentation regulatory protein MAL63 (MAL63) (Saccharomyces cerevisiae (Baker's yeast)).